The following is a 367-amino-acid chain: MNIHTPGLELTPDRDEAQAALDVLRQWAKQATPAEISELDPSVARLVPGMDGVEYPALSREYPSDFSLDDGYKETLPDLQNGPSSLIRGTKQQIQHVGISNFRLPIRFHTRSGGDITLETSVTGSVSLEADKKGINMSRIMRSFYKHAEETFSFEVIEAALDAYINDLESFDARIQMRFSFPMKVDSLRSGLSGYQYYDIALELVDQGGVRKKIMHLDYVYSSTCPCSLELSEHARATRGQLATPHSQRSVARISVEVENDGQCLWFEDLIEACRRAVPTETQVMVKREDEQAFAELNAANPIFVEDAARLFCEQLHSDTRIGDFRVIASHQESLHSHDAVSVLMEGETFKSESLDPKLFNTLFHVG.

It belongs to the GTP cyclohydrolase IV family.

It carries out the reaction GTP + H2O = 7,8-dihydroneopterin 3'-triphosphate + formate + H(+). Its pathway is cofactor biosynthesis; 7,8-dihydroneopterin triphosphate biosynthesis; 7,8-dihydroneopterin triphosphate from GTP: step 1/1. Converts GTP to 7,8-dihydroneopterin triphosphate. The sequence is that of GTP cyclohydrolase FolE2 from Roseobacter denitrificans (strain ATCC 33942 / OCh 114) (Erythrobacter sp. (strain OCh 114)).